A 273-amino-acid chain; its full sequence is 4-hydroxy-tetrahydrodipicolinate reductase (273 aa).

NAD(+)-binding positions include 12-17 (GAGGRM) and glutamate 38. Residue arginine 39 coordinates NADP(+). Residues 102–104 (GTT) and 126–129 (AANF) contribute to the NAD(+) site. Histidine 159 acts as the Proton donor/acceptor in catalysis. Histidine 160 is a binding site for (S)-2,3,4,5-tetrahydrodipicolinate. The active-site Proton donor is lysine 163. 169 to 170 (GT) contributes to the (S)-2,3,4,5-tetrahydrodipicolinate binding site.

Belongs to the DapB family. Homotetramer.

The protein localises to the cytoplasm. It carries out the reaction (S)-2,3,4,5-tetrahydrodipicolinate + NAD(+) + H2O = (2S,4S)-4-hydroxy-2,3,4,5-tetrahydrodipicolinate + NADH + H(+). It catalyses the reaction (S)-2,3,4,5-tetrahydrodipicolinate + NADP(+) + H2O = (2S,4S)-4-hydroxy-2,3,4,5-tetrahydrodipicolinate + NADPH + H(+). It participates in amino-acid biosynthesis; L-lysine biosynthesis via DAP pathway; (S)-tetrahydrodipicolinate from L-aspartate: step 4/4. Its function is as follows. Catalyzes the conversion of 4-hydroxy-tetrahydrodipicolinate (HTPA) to tetrahydrodipicolinate. The chain is 4-hydroxy-tetrahydrodipicolinate reductase from Shigella boydii serotype 4 (strain Sb227).